Consider the following 293-residue polypeptide: Ribonuclease HIII (293 aa).

The region spanning 78-293 (LPLIGTDEVG…TEKAKKRLER (216 aa)) is the RNase H type-2 domain. A divalent metal cation-binding residues include aspartate 84, glutamate 85, and aspartate 187.

It belongs to the RNase HII family. RnhC subfamily. The cofactor is Mn(2+). It depends on Mg(2+) as a cofactor.

Its subcellular location is the cytoplasm. The catalysed reaction is Endonucleolytic cleavage to 5'-phosphomonoester.. Functionally, endonuclease that specifically degrades the RNA of RNA-DNA hybrids. The protein is Ribonuclease HIII of Streptococcus pneumoniae serotype 19F (strain G54).